Here is a 127-residue protein sequence, read N- to C-terminus: Ribonuclease P protein component (127 aa).

The protein belongs to the RnpA family. As to quaternary structure, consists of a catalytic RNA component (M1 or rnpB) and a protein subunit.

It carries out the reaction Endonucleolytic cleavage of RNA, removing 5'-extranucleotides from tRNA precursor.. Its function is as follows. RNaseP catalyzes the removal of the 5'-leader sequence from pre-tRNA to produce the mature 5'-terminus. It can also cleave other RNA substrates such as 4.5S RNA. The protein component plays an auxiliary but essential role in vivo by binding to the 5'-leader sequence and broadening the substrate specificity of the ribozyme. The protein is Ribonuclease P protein component of Prochlorococcus marinus (strain SARG / CCMP1375 / SS120).